Consider the following 319-residue polypeptide: Glutathione synthetase (319 aa).

Residues 125–311 (KLFTAWFPEL…ITGMLMDAIE (187 aa)) form the ATP-grasp domain. 151 to 207 (HQEHGDIILKPLDGMGGTSIFRVKQDDPNLSVIIETLTELSSRFCMAQNFLPAIKEG) is a binding site for ATP. Residues E281 and N283 each coordinate Mg(2+).

Belongs to the prokaryotic GSH synthase family. It depends on Mg(2+) as a cofactor. Mn(2+) is required as a cofactor.

The catalysed reaction is gamma-L-glutamyl-L-cysteine + glycine + ATP = glutathione + ADP + phosphate + H(+). It participates in sulfur metabolism; glutathione biosynthesis; glutathione from L-cysteine and L-glutamate: step 2/2. This is Glutathione synthetase from Yersinia pestis.